A 307-amino-acid chain; its full sequence is Aspartate carbamoyltransferase catalytic subunit (307 aa).

Carbamoyl phosphate contacts are provided by R59 and T60. Residue K87 participates in L-aspartate binding. Carbamoyl phosphate-binding residues include R109, H137, and Q140. 2 residues coordinate L-aspartate: R173 and R223. Carbamoyl phosphate contacts are provided by G266 and P267.

This sequence belongs to the aspartate/ornithine carbamoyltransferase superfamily. ATCase family. Heterododecamer (2C3:3R2) of six catalytic PyrB chains organized as two trimers (C3), and six regulatory PyrI chains organized as three dimers (R2).

The enzyme catalyses carbamoyl phosphate + L-aspartate = N-carbamoyl-L-aspartate + phosphate + H(+). The protein operates within pyrimidine metabolism; UMP biosynthesis via de novo pathway; (S)-dihydroorotate from bicarbonate: step 2/3. In terms of biological role, catalyzes the condensation of carbamoyl phosphate and aspartate to form carbamoyl aspartate and inorganic phosphate, the committed step in the de novo pyrimidine nucleotide biosynthesis pathway. The chain is Aspartate carbamoyltransferase catalytic subunit from Helicobacter pylori (strain G27).